We begin with the raw amino-acid sequence, 349 residues long: Dihydroorotate dehydrogenase (quinone) (349 aa).

Residues 67–71 and T91 each bind FMN; that span reads AGLDK. K71 serves as a coordination point for substrate. Residue 116–120 participates in substrate binding; it reads NRLGF. FMN is bound by residues N147 and N180. N180 lines the substrate pocket. S183 serves as the catalytic Nucleophile. N185 is a binding site for substrate. FMN-binding residues include K225 and T253. 254–255 contacts substrate; it reads NT. FMN contacts are provided by residues G276, G305, and 326–327; that span reads YT.

It belongs to the dihydroorotate dehydrogenase family. Type 2 subfamily. As to quaternary structure, monomer. FMN serves as cofactor.

The protein resides in the cell membrane. It carries out the reaction (S)-dihydroorotate + a quinone = orotate + a quinol. It functions in the pathway pyrimidine metabolism; UMP biosynthesis via de novo pathway; orotate from (S)-dihydroorotate (quinone route): step 1/1. In terms of biological role, catalyzes the conversion of dihydroorotate to orotate with quinone as electron acceptor. In Bordetella pertussis (strain Tohama I / ATCC BAA-589 / NCTC 13251), this protein is Dihydroorotate dehydrogenase (quinone).